Here is a 730-residue protein sequence, read N- to C-terminus: MTIDGTGQSKEALQDERLNTGSDKVYQNYMMPALELYDAKVSINHWQLRDCIKPGSMNQSKLYYIYDHSIRVLDTDSSVLRSPVRRHNSIQPSNSGKNSTEKTSTKGSRTTGSYISKNLHVPSEKLVEFNFKPRCFTELNGLTVCGGLIGSDDKGFPSNWNRLAQDANISLPPPSQPINISKNISFPINSHYSNPNIWKGIVEFYNQETDTMMTFTLGQFINNCVTLYDRASMQFDLFACNNDGHLYQCDVSNRDVTLVKRYADLKFPLNNASLSHDGQTMVVSGDSNKFAVYNQNELTNQFSLHYDNHPSWGSSVNRVRRIPRFALPDESEYIENIYEAPNSDHGFYNSFSENDLQFATVFQNGTCAIYDIRNMATPMAEISSTRPHSHNGAFRVCRFSYGLDDLLFISEHQGRVHVVDTRNYVNHQVIVIPDKVNMEYINERKHNTNHNFTTNNNNENESNDSKNELQGADYRSLSRRRFSLPSMPNVTTEPWITMAQRIPKKYLEPQILPFPKVMDKISNESVLFSTKGSSSSDVAHPYKRRCSFRVRRVSTSAPTADYSNNNVNASLGTPAADSIATSSSNSAPQNLIDPLILSHQQASNDVFEDDEYYEAYNDVHSTYRVSSDYHGVSARAFESFLRPPSTPDLPSDDDNFAANSRNNRGTSNFLRRPVITTQESNEFSEENNISGIDWVEDRNGSSLIIGTDYGIMRWNINSWARRSFSSYDLC.

Phosphoserine is present on residues Ser-82 and Ser-89. Disordered stretches follow at residues Ser-82 to Tyr-114 and Asn-447 to Glu-468. The segment covering Ser-89–Asn-98 has biased composition (polar residues). Residues Asn-449–Asn-460 are compositionally biased toward low complexity. 2 positions are modified to phosphoserine: Ser-483 and Ser-651.

This is an uncharacterized protein from Saccharomyces cerevisiae (strain ATCC 204508 / S288c) (Baker's yeast).